A 332-amino-acid chain; its full sequence is Ubiquinone biosynthesis protein COQ4, mitochondrial (332 aa).

Residues 1–16 constitute a mitochondrion transit peptide; it reads MFTVSKKSLQASRNAF. Residues His-212, Asp-213, His-216, and Glu-228 each contribute to the Zn(2+) site.

The protein belongs to the COQ4 family. In terms of assembly, component of a multi-subunit COQ enzyme complex, composed of at least COQ3, COQ4, COQ5, COQ6, COQ7 and COQ9. Zn(2+) serves as cofactor.

The protein resides in the mitochondrion inner membrane. The catalysed reaction is a 4-hydroxy-3-methoxy-5-(all-trans-polyprenyl)benzoate + H(+) = a 2-methoxy-6-(all-trans-polyprenyl)phenol + CO2. Its pathway is cofactor biosynthesis; ubiquinone biosynthesis. In terms of biological role, lyase that catalyzes the C1-decarboxylation of 4-hydroxy-3-methoxy-5-(all-trans-polyprenyl)benzoic acid into 2-methoxy-6-(all-trans-polyprenyl)phenol during ubiquinone biosynthesis. In Kluyveromyces lactis (strain ATCC 8585 / CBS 2359 / DSM 70799 / NBRC 1267 / NRRL Y-1140 / WM37) (Yeast), this protein is Ubiquinone biosynthesis protein COQ4, mitochondrial.